Here is a 146-residue protein sequence, read N- to C-terminus: Snaclec 4 (146 aa).

Residues 1-23 form the signal peptide; it reads MGRFISISFGLLVVFLSLSGTEA. 3 disulfides stabilise this stretch: Cys27–Cys38, Cys55–Cys144, and Cys121–Cys136. One can recognise a C-type lectin domain in the interval 34–145; the sequence is YDQNCYKVFT…CNFIAPVVCK (112 aa).

Belongs to the snaclec family. Heterodimer; disulfide-linked.

The protein resides in the secreted. Its function is as follows. Interferes with one step of hemostasis (modulation of platelet aggregation, or coagulation cascade, for example). This is Snaclec 4 from Daboia siamensis (Eastern Russel's viper).